Consider the following 82-residue polypeptide: Delta-actitoxin-Aeq2b 1 (82 aa).

The first 19 residues, 1–19, serve as a signal peptide directing secretion; sequence MNRLMILVFAAVILALASA. Residues 20–26 constitute a propeptide that is removed on maturation; the sequence is DEDVDIA. Cystine bridges form between cysteine 32–cysteine 79, cysteine 34–cysteine 69, and cysteine 62–cysteine 80.

It belongs to the sea anemone sodium channel inhibitory toxin family. Type I subfamily.

It localises to the secreted. The protein localises to the nematocyst. Binds specifically to voltage-gated sodium channels (Nav), thereby delaying their inactivation during signal transduction. Causes death to crabs. The sequence is that of Delta-actitoxin-Aeq2b 1 from Actinia equina (Beadlet anemone).